Reading from the N-terminus, the 112-residue chain is FK506-binding protein 1A (112 aa).

Positions 20 to 108 (GDFVTIHYTG…IFEVELLGIN (89 aa)) constitute a PPIase FKBP-type domain.

Belongs to the FKBP-type PPIase family. FKBP1 subfamily.

It localises to the cytoplasm. The catalysed reaction is [protein]-peptidylproline (omega=180) = [protein]-peptidylproline (omega=0). Inhibited by both FK506 and rapamycin. PPIases accelerate the folding of proteins. It catalyzes the cis-trans isomerization of proline imidic peptide bonds in oligopeptides. The polypeptide is FK506-binding protein 1A (fpr1A) (Aspergillus fumigatus (strain ATCC MYA-4609 / CBS 101355 / FGSC A1100 / Af293) (Neosartorya fumigata)).